A 666-amino-acid chain; its full sequence is Calpain-10 (666 aa).

Residues 13–321 (LFRDAAFPAS…FDEVTIGYPV (309 aa)) form the Calpain catalytic domain. Catalysis depends on residues C73, H238, and N263. Domain III stretches follow at residues 322–488 (TEAG…ISLS) and 507–648 (EWET…IHSQ).

The protein belongs to the peptidase C2 family.

Its function is as follows. Calcium-regulated non-lysosomal thiol-protease which catalyzes limited proteolysis of substrates involved in cytoskeletal remodeling and signal transduction. May play a role in insulin-stimulated glucose uptake. The sequence is that of Calpain-10 (Capn10) from Mus musculus (Mouse).